The chain runs to 197 residues: Imidazoleglycerol-phosphate dehydratase (197 aa).

This sequence belongs to the imidazoleglycerol-phosphate dehydratase family.

It localises to the cytoplasm. The catalysed reaction is D-erythro-1-(imidazol-4-yl)glycerol 3-phosphate = 3-(imidazol-4-yl)-2-oxopropyl phosphate + H2O. The protein operates within amino-acid biosynthesis; L-histidine biosynthesis; L-histidine from 5-phospho-alpha-D-ribose 1-diphosphate: step 6/9. This Syntrophobacter fumaroxidans (strain DSM 10017 / MPOB) protein is Imidazoleglycerol-phosphate dehydratase.